A 189-amino-acid polypeptide reads, in one-letter code: dCTP deaminase, dUMP-forming (189 aa).

Residues 101 to 106 (KSSLGR), aspartate 119, 127 to 129 (TLE), glutamine 148, tyrosine 162, and glutamine 174 contribute to the dCTP site. The active-site Proton donor/acceptor is glutamate 129.

Belongs to the dCTP deaminase family. As to quaternary structure, homotrimer.

It catalyses the reaction dCTP + 2 H2O = dUMP + NH4(+) + diphosphate. The protein operates within pyrimidine metabolism; dUMP biosynthesis; dUMP from dCTP: step 1/1. Bifunctional enzyme that catalyzes both the deamination of dCTP to dUTP and the hydrolysis of dUTP to dUMP without releasing the toxic dUTP intermediate. The sequence is that of dCTP deaminase, dUMP-forming from Rhodococcus opacus (strain B4).